The following is a 901-amino-acid chain: MDIVPVVALCCCLVLLPSWAYGLGSMASIAVSYGEDGPVFCGLNSDGSHLVTCFGADASVVYGAPSRIPFVGVTAGDGFACGLLLDTNQPYCWGSNSYVKIGVPQPMVEGAMYSELSAGDNHLCALRTSVKGFHSVNGDTSVIDCWGYNMTATHTVTGAVSAISAGSVFNCGLFARNRTVFCWGDESVSGVIGLAPRNVRFQSIGAGGYHVCGVLENAQVFCWGRSLEMQQMSTPSSTDDGDVNIVPMDAMVSVVGGRFHACGIRSLDHQVACWGFTLQNSTLAPKGLRVYAIVAGDYFTCGVPAETSLKPMCWGHSGPLALPMAVSPGICVSDSCSHGYYEYANHGEVGSGSKTCKPANSRLCLPCSVGCPDDSYESSPCNATADRVCQFDCSKCASDECVSFCLSQKRTKNRKFMAFQLRIFVAEIAFAVILVFSVTAIACLYVRYKLRHCQCSKNELRLAKNTTYSFRKDNMKIQPDVEDLKIRRAQEFSYEELEQATGGFSEDSQVGKGSFSCVFKGILRDGTVVAVKRAIKASDVKKSSKEFHTELDLLSRLNHAHLLNLLGYCEDGSERLLVYEFMAHGSLYQHLHGKDPNLKKRLNWARRVTIAVQAARGIEYLHGYACPPVIHRDIKSSNILIDEDHNARVADFGLSILGPADSGTPLSELPAGTLGYLDPEYYRLHYLTTKSDVYSFGVVLLEILSGRKAIDMQFEEGNIVEWAVPLIKAGDISALLDPVLSPPSDLEALKKIAAVACKCVRMRAKDRPSMDKVTTALERALALLMGSPCIEQPILPTEVVLGSSRMHKKVSQRSSNHSCSENDLVDGDDQRIEYRAPSWITFPSVTSSQRRKSSASEADMDGRTTTDGRNVGSSIGDGLRSLEEEISPASPQENLYLQHNF.

An N-terminal signal peptide occupies residues methionine 1–glycine 22. 7 tandem repeats follow at residues valine 31–serine 66, phenylalanine 70–glutamine 105, leucine 123–glycine 158, valine 160–glycine 193, phenylalanine 201–threonine 234, methionine 251–proline 285, and valine 290–proline 328. Positions valine 31 to proline 328 are 7 X 36 AA repeats. 2 N-linked (GlcNAc...) asparagine glycosylation sites follow: asparagine 149 and asparagine 177. Residue asparagine 280 is glycosylated (N-linked (GlcNAc...) asparagine). The stretch at serine 335–cysteine 389 is one TNFR-Cys repeat. 3 cysteine pairs are disulfide-bonded: cysteine 336–cysteine 364, cysteine 367–cysteine 381, and cysteine 371–cysteine 389. Asparagine 382 is a glycosylation site (N-linked (GlcNAc...) asparagine). The chain crosses the membrane as a helical span at residues isoleucine 423–cysteine 443. The Protein kinase domain maps to phenylalanine 504–leucine 781. ATP contacts are provided by residues valine 510–valine 518 and lysine 532. Residue aspartate 633 is the Proton acceptor of the active site. The disordered stretch occupies residues valine 845–phenylalanine 901. Over residues alanine 889–phenylalanine 901 the composition is skewed to polar residues.

Belongs to the protein kinase superfamily. Ser/Thr protein kinase family. As to quaternary structure, homodimer. In terms of processing, autophosphorylated. In terms of tissue distribution, specifically expressed in the epidermal cells of paleas and lemmas.

It localises to the cell membrane. The protein localises to the endosome. The protein resides in the multivesicular body membrane. It catalyses the reaction L-seryl-[protein] + ATP = O-phospho-L-seryl-[protein] + ADP + H(+). The enzyme catalyses L-threonyl-[protein] + ATP = O-phospho-L-threonyl-[protein] + ADP + H(+). Its function is as follows. Receptor protein kinase. Could play a role in a differentiation signal. Controls formative cell division in meristems. Regulates epidermal cell differentiation in many organs. During floral organogenesis, required to maintain the interlocking of the palea and lemma, and fertility. Triggers culm elongation. The protein is Serine/threonine-protein kinase-like protein CR4 of Oryza sativa subsp. japonica (Rice).